A 101-amino-acid polypeptide reads, in one-letter code: Large ribosomal subunit protein bL28 (101 aa).

This sequence belongs to the bacterial ribosomal protein bL28 family.

The chain is Large ribosomal subunit protein bL28 from Methylorubrum populi (strain ATCC BAA-705 / NCIMB 13946 / BJ001) (Methylobacterium populi).